We begin with the raw amino-acid sequence, 294 residues long: Cytidine deaminase (294 aa).

CMP/dCMP-type deaminase domains follow at residues 48-168 (DEDA…FGPK) and 186-294 (LTGD…VLLG). Residue 89–91 (NME) participates in substrate binding. Zn(2+) is bound at residue His-102. The Proton donor role is filled by Glu-104. Cys-129 and Cys-132 together coordinate Zn(2+).

This sequence belongs to the cytidine and deoxycytidylate deaminase family. Homodimer. Zn(2+) serves as cofactor.

The catalysed reaction is cytidine + H2O + H(+) = uridine + NH4(+). It carries out the reaction 2'-deoxycytidine + H2O + H(+) = 2'-deoxyuridine + NH4(+). In terms of biological role, this enzyme scavenges exogenous and endogenous cytidine and 2'-deoxycytidine for UMP synthesis. This chain is Cytidine deaminase, found in Salmonella schwarzengrund (strain CVM19633).